Consider the following 1122-residue polypeptide: Midnolin homolog (1122 aa).

The Ubiquitin-like domain maps to 69–143 (INLNISTTTG…IILIPNVETG (75 aa)). Residues 210–300 (GGASGSSINA…SGQRSSGRIG (91 aa)) are required for interaction with Pc. Disordered regions lie at residues 257 to 399 (VGGS…STLN), 596 to 630 (KHRHYHGQGHGHGHGNGHSSSSSSSSSSSSSHFFN), 645 to 677 (FATSSSSSSSSPSSSSSSPSKRRKLEQGMGAGA), 746 to 775 (GVVSSGRSSSSGATSSGAASGEEAPRKSGS), 840 to 876 (APTTGSVSGSGSGSGSSGSSSTTSSGSGLHHGSRSKM), 886 to 905 (KCNSRAQQQQQQSATLASGS), 922 to 955 (AATKASTSSKSSSHSCCQTAEAPSSMTSQSNGCT), and 1067 to 1122 (AAPA…DTAA). The span at 266–298 (SGTSSSSSSTSSSSSSSSSSSRTRSSGQRSSGR) shows a compositional bias: low complexity. Basic residues-rich tracts occupy residues 300–310 (GHGHVHSHQHP) and 321–352 (SHGHGHGHSHGNGHGHHHHHHHHHHHHHHHHN). Low complexity predominate over residues 375–397 (PSSSGASGSAPATGTGQSQSSST). Over residues 596-610 (KHRHYHGQGHGHGHG) the composition is skewed to basic residues. Composition is skewed to low complexity over residues 612–627 (GHSSSSSSSSSSSSSH), 648–663 (SSSSSSSSPSSSSSSP), 746–766 (GVVSSGRSSSSGATSSGAASG), 856–867 (SGSSSTTSSGSG), 889–903 (SRAQQQQQQSATLAS), and 922–936 (AATKASTSSKSSSHS). Composition is skewed to polar residues over residues 937 to 954 (CCQTAEAPSSMTSQSNGC) and 1071 to 1085 (NSITGNSSNANVNGN). Residues 1086-1107 (TSTAPATAATSAAAAPTAAPPS) show a composition bias toward low complexity.

In terms of assembly, interacts with PRC1 complex member polycomb protein Pc; the interaction targets Pc for ubiquitin-independent proteasomal degradation. Does not interact with PRC1 members Ph, Psc or Sce so does not appear to be a member of the PRC1 complex. Interacts with 26S proteasome regulatory subunit Rpn10.

Its subcellular location is the nucleus. In terms of biological role, facilitates ubiquitin-independent proteasomal degradation of polycomb protein Pc by interacting directly with the proteasome and recruiting Pc to it. This chain is Midnolin homolog, found in Drosophila melanogaster (Fruit fly).